The primary structure comprises 256 residues: Small ribosomal subunit protein eS1 (256 aa).

Ala2 is modified (N-acetylalanine; partial).

This sequence belongs to the eukaryotic ribosomal protein eS1 family. In terms of assembly, component of the small ribosomal subunit. Mature ribosomes consist of a small (40S) and a large (60S) subunit. The 40S subunit contains about 33 different proteins and 1 molecule of RNA (18S). The 60S subunit contains about 49 different proteins and 3 molecules of RNA (25S, 5.8S and 5S).

It localises to the cytoplasm. The chain is Small ribosomal subunit protein eS1 from Coprinopsis cinerea (strain Okayama-7 / 130 / ATCC MYA-4618 / FGSC 9003) (Inky cap fungus).